We begin with the raw amino-acid sequence, 269 residues long: Putative pyruvate, phosphate dikinase regulatory protein (269 aa).

An ADP-binding site is contributed by glycine 151–threonine 158.

Belongs to the pyruvate, phosphate/water dikinase regulatory protein family. PDRP subfamily.

It carries out the reaction N(tele)-phospho-L-histidyl/L-threonyl-[pyruvate, phosphate dikinase] + ADP = N(tele)-phospho-L-histidyl/O-phospho-L-threonyl-[pyruvate, phosphate dikinase] + AMP + H(+). The catalysed reaction is N(tele)-phospho-L-histidyl/O-phospho-L-threonyl-[pyruvate, phosphate dikinase] + phosphate + H(+) = N(tele)-phospho-L-histidyl/L-threonyl-[pyruvate, phosphate dikinase] + diphosphate. Bifunctional serine/threonine kinase and phosphorylase involved in the regulation of the pyruvate, phosphate dikinase (PPDK) by catalyzing its phosphorylation/dephosphorylation. This chain is Putative pyruvate, phosphate dikinase regulatory protein, found in Geobacter metallireducens (strain ATCC 53774 / DSM 7210 / GS-15).